A 596-amino-acid chain; its full sequence is Heat shock factor protein 5 (596 aa).

A DNA-binding region spans residues 10-200; that stretch reads NPNNFPAKLW…FHRSFRRDSL (191 aa). The tract at residues 541 to 576 is disordered; sequence EMGPASKPSEDTGLATPARYREHRSNSQQGKSPDLH. Serine 572 carries the phosphoserine modification.

It belongs to the HSF family. In terms of assembly, homooligomer.

The protein resides in the nucleus. It localises to the chromosome. Its function is as follows. DNA-binding transcription factor that is essential for male fertility, spermatogenesis and meiotic prophase progression in spermatocytes under non-stress conditions. Positvely and negatively regulates gene expression to ensure progression of meiotic prophase beyond pachytene stage in spermatocytes. Plays a role in male germline meiotic sex chromosome remodeling and silencing through regulation of SMARCA4. The protein is Heat shock factor protein 5 (HSF5) of Homo sapiens (Human).